A 310-amino-acid polypeptide reads, in one-letter code: Nucleotide-binding protein Mmc1_3333 (310 aa).

19 to 26 contacts ATP; sequence GLSGAGKS.

Belongs to the RapZ-like family.

Displays ATPase and GTPase activities. The protein is Nucleotide-binding protein Mmc1_3333 of Magnetococcus marinus (strain ATCC BAA-1437 / JCM 17883 / MC-1).